A 474-amino-acid chain; its full sequence is tRNA-2-methylthio-N(6)-dimethylallyladenosine synthase (474 aa).

An MTTase N-terminal domain is found at 21–138 (ERVYVETQGC…LPQMLARRRS (118 aa)). [4Fe-4S] cluster is bound by residues Cys30, Cys67, Cys101, Cys175, Cys179, and Cys182. The Radical SAM core domain occupies 161–395 (RAEGPTAYVS…ARLHEQQSAA (235 aa)). In terms of domain architecture, TRAM spans 397 to 460 (RALLGTRQSV…THSLRGRVVS (64 aa)).

This sequence belongs to the methylthiotransferase family. MiaB subfamily. As to quaternary structure, monomer. [4Fe-4S] cluster is required as a cofactor.

The protein localises to the cytoplasm. The enzyme catalyses N(6)-dimethylallyladenosine(37) in tRNA + (sulfur carrier)-SH + AH2 + 2 S-adenosyl-L-methionine = 2-methylsulfanyl-N(6)-dimethylallyladenosine(37) in tRNA + (sulfur carrier)-H + 5'-deoxyadenosine + L-methionine + A + S-adenosyl-L-homocysteine + 2 H(+). Its function is as follows. Catalyzes the methylthiolation of N6-(dimethylallyl)adenosine (i(6)A), leading to the formation of 2-methylthio-N6-(dimethylallyl)adenosine (ms(2)i(6)A) at position 37 in tRNAs that read codons beginning with uridine. This chain is tRNA-2-methylthio-N(6)-dimethylallyladenosine synthase, found in Halorhodospira halophila (strain DSM 244 / SL1) (Ectothiorhodospira halophila (strain DSM 244 / SL1)).